We begin with the raw amino-acid sequence, 132 residues long: Z-ring associated protein G (132 aa).

Residues 1-21 form a helical membrane-spanning segment; the sequence is MTWEYALIGLVVGIIIGAVAM. Residues 95–132 form a disordered region; that stretch reads FRNRLAESEASNDQAPVQMPRDYSEGASGLLRTGAKRD.

It belongs to the ZapG family.

It localises to the cell inner membrane. In terms of biological role, involved in cell division, cell envelope biogenesis and cell shape maintenance. The chain is Z-ring associated protein G from Escherichia coli O157:H7.